A 183-amino-acid chain; its full sequence is Small ribosomal subunit protein uS4c (183 aa).

Residues 82–143 form the S4 RNA-binding domain; it reads MRLDNILFRL…KQRSKALIQN (62 aa).

It belongs to the universal ribosomal protein uS4 family. In terms of assembly, part of the 30S ribosomal subunit. Contacts protein S5. The interaction surface between S4 and S5 is involved in control of translational fidelity.

The protein localises to the plastid. It localises to the chloroplast. Its function is as follows. One of the primary rRNA binding proteins, it binds directly to 16S rRNA where it nucleates assembly of the body of the 30S subunit. In terms of biological role, with S5 and S12 plays an important role in translational accuracy. This chain is Small ribosomal subunit protein uS4c (rps4), found in Babiana stricta (Baboon flower).